The primary structure comprises 516 residues: 2-isopropylmalate synthase (516 aa).

The 264-residue stretch at 5–268 (LIIFDTTLRD…DLGIDTTQIV (264 aa)) folds into the Pyruvate carboxyltransferase domain. Mn(2+)-binding residues include Asp14, His202, His204, and Asn239. The regulatory domain stretch occupies residues 395–516 (KFVSLSQHSE…DKLNPQRADI (122 aa)).

It belongs to the alpha-IPM synthase/homocitrate synthase family. LeuA type 1 subfamily. As to quaternary structure, homodimer. Requires Mn(2+) as cofactor.

Its subcellular location is the cytoplasm. It carries out the reaction 3-methyl-2-oxobutanoate + acetyl-CoA + H2O = (2S)-2-isopropylmalate + CoA + H(+). It functions in the pathway amino-acid biosynthesis; L-leucine biosynthesis; L-leucine from 3-methyl-2-oxobutanoate: step 1/4. In terms of biological role, catalyzes the condensation of the acetyl group of acetyl-CoA with 3-methyl-2-oxobutanoate (2-ketoisovalerate) to form 3-carboxy-3-hydroxy-4-methylpentanoate (2-isopropylmalate). The sequence is that of 2-isopropylmalate synthase from Paraburkholderia phymatum (strain DSM 17167 / CIP 108236 / LMG 21445 / STM815) (Burkholderia phymatum).